The primary structure comprises 158 residues: 2-C-methyl-D-erythritol 2,4-cyclodiphosphate synthase (158 aa).

D9 and H11 together coordinate a divalent metal cation. Residues 9 to 11 and 35 to 36 contribute to the 4-CDP-2-C-methyl-D-erythritol 2-phosphate site; these read DVH and HS. H43 is an a divalent metal cation binding site. 4-CDP-2-C-methyl-D-erythritol 2-phosphate is bound by residues 57 to 59, 62 to 66, 133 to 136, F140, and R143; these read DIG, FPDTD, and TTTE.

The protein belongs to the IspF family. Homotrimer. A divalent metal cation serves as cofactor.

The catalysed reaction is 4-CDP-2-C-methyl-D-erythritol 2-phosphate = 2-C-methyl-D-erythritol 2,4-cyclic diphosphate + CMP. Its pathway is isoprenoid biosynthesis; isopentenyl diphosphate biosynthesis via DXP pathway; isopentenyl diphosphate from 1-deoxy-D-xylulose 5-phosphate: step 4/6. Its function is as follows. Involved in the biosynthesis of isopentenyl diphosphate (IPP) and dimethylallyl diphosphate (DMAPP), two major building blocks of isoprenoid compounds. Catalyzes the conversion of 4-diphosphocytidyl-2-C-methyl-D-erythritol 2-phosphate (CDP-ME2P) to 2-C-methyl-D-erythritol 2,4-cyclodiphosphate (ME-CPP) with a corresponding release of cytidine 5-monophosphate (CMP). The protein is 2-C-methyl-D-erythritol 2,4-cyclodiphosphate synthase of Geobacillus kaustophilus (strain HTA426).